A 1242-amino-acid chain; its full sequence is von Willebrand factor A domain-containing protein 5B2 (1242 aa).

Residues 1–138 (MPGLYCPSSW…TMTVTLHSSR (138 aa)) form the VIT domain. The VWFA domain occupies 354 to 527 (ELLFLLDSSS…KALEPALSDI (174 aa)). Disordered stretches follow at residues 569 to 650 (SRPP…SDTA), 670 to 726 (CSAS…CPLP), 751 to 794 (LAGR…GQGL), 957 to 976 (CSSE…SHLD), 987 to 1055 (KGLQ…GSDH), and 1118 to 1159 (QGDS…GLGG). Low complexity predominate over residues 588-604 (PSPEEAPSAASPGTEPT). Positions 605 to 619 (GTSEPLGTGTVSAEL) are enriched in polar residues. The segment covering 681 to 700 (TGSSESPGSQGPGSPEGSAP) has biased composition (low complexity). The segment covering 1125–1138 (SCSPSPSSGSEGPG) has biased composition (low complexity).

The chain is von Willebrand factor A domain-containing protein 5B2 (VWA5B2) from Homo sapiens (Human).